The sequence spans 88 residues: Small ribosomal subunit protein bS20 (88 aa).

The segment at 1–20 (MANIKQQKKRNKTNEKRRLR) is disordered.

Belongs to the bacterial ribosomal protein bS20 family.

Binds directly to 16S ribosomal RNA. This is Small ribosomal subunit protein bS20 from Phytoplasma australiense.